Reading from the N-terminus, the 339-residue chain is 2,3,4,5-tetrahydropyridine-2,6-dicarboxylate N-succinyltransferase (339 aa).

Asp180 contributes to the Mg(2+) binding site. Catalysis depends on Glu213, which acts as the Acyl-anhydride intermediate. Succinyl-CoA contacts are provided by residues Arg215, Gly230, Ser233, Ala256, 271-272, Gly279, and Lys300; that span reads EA.

Belongs to the type 2 tetrahydrodipicolinate N-succinyltransferase family. As to quaternary structure, homotrimer.

The protein resides in the cytoplasm. The catalysed reaction is (S)-2,3,4,5-tetrahydrodipicolinate + succinyl-CoA + H2O = (S)-2-succinylamino-6-oxoheptanedioate + CoA. Its pathway is amino-acid biosynthesis; L-lysine biosynthesis via DAP pathway; LL-2,6-diaminopimelate from (S)-tetrahydrodipicolinate (succinylase route): step 1/3. In terms of biological role, catalyzes the conversion of the cyclic tetrahydrodipicolinate (THDP) into the acyclic N-succinyl-L-2-amino-6-oxopimelate using succinyl-CoA. In Bifidobacterium longum (strain NCC 2705), this protein is 2,3,4,5-tetrahydropyridine-2,6-dicarboxylate N-succinyltransferase.